We begin with the raw amino-acid sequence, 697 residues long: MRLTVGALLACAALGLCLAVPDKTVKWCAVSEHENTKCISFRDHMKTVLPPDGPRLACVKKTSYPDCIKAISASEADAMTLDGGWVYDAGLTPNNLKPVAAEFYGSVEHPQTYYYAVAVVKKGTDFQLNQLEGKKSCHTGLGRSAGWVIPIGLLFCKLSEPRSPLEKAVSSFFSGSCVPCADPVAFPKLCQLCPGCGCSSTQPFFGYVGAFKCLKDGGGDVAFVKHTTIFEVLPEKADRDQYELLCLDNTRKPVDQYEDCYLARIPSHAVVARKNNGKEDLIWEILKVAQEHFGKGKSKDFQLFSSPLGKDLLFKDSAFGLLRVPPRMDYRLYLGHNYVTAIRNQQEGVCPEGSIDNSPVKWCALSHLERTKCDEWSIISEGKIECESAETTEDCIEKIVNGEADAMTLDGGHAYIAGQCGLVPVMAEYYESSNCAIPSQQGIFPKGYYAVAVVKASDTSITWNNLKGKKSCHTGVDRTAGWNIPMGMLYNRINHCKFDEFFSQGCAPGYEKNSTLCDLCIGPLKCAPNNKEEYNGYTGAFRCLVEKGDVAFVKHQTVLDNTEGKNPAEWAKNLKQEDFELLCPDGTRKPVKDFASCHLAQAPNHVVVSRKEKAARVKAVLTSQETLFGGSDCTGNFCLFKSTTKDLLFRDDTKCFVKLPEGTTPEKYLGAEYMQSVGNMRKCSTSRLLEACTFHKH.

The first 19 residues, 1–19 (MRLTVGALLACAALGLCLA), serve as a signal peptide directing secretion. Transferrin-like domains are found at residues 25 to 347 (VKWC…NQQE) and 360 to 682 (VKWC…NMRK). 2 disulfides stabilise this stretch: Cys28/Cys67 and Cys38/Cys58. Arg42 carries the post-translational modification Dimethylated arginine. 2 residues coordinate Fe(3+): Asp82 and Tyr114. Intrachain disulfides connect Cys137–Cys213, Cys156–Cys350, Cys177–Cys193, Cys180–Cys196, Cys190–Cys198, Cys246–Cys260, Cys363–Cys395, and Cys373–Cys386. The hydrogencarbonate site is built by Thr139, Arg143, Ala145, and Gly146. Tyr207 contributes to the Fe(3+) binding site. Residue His268 coordinates Fe(3+). Phosphoserine is present on Ser388. The Fe(3+) site is built by Asp410 and Tyr448. 8 disulfide bridges follow: Cys420-Cys692, Cys435-Cys655, Cys472-Cys543, Cys496-Cys683, Cys506-Cys520, Cys517-Cys526, Cys583-Cys597, and Cys633-Cys638. Thr474, Arg478, Ala480, and Gly481 together coordinate hydrogencarbonate. The N-linked (GlcNAc...) asparagine glycan is linked to Asn513. Tyr537 contributes to the Fe(3+) binding site. His605 is a binding site for Fe(3+). A Phosphoserine modification is found at Ser684.

Belongs to the transferrin family. Monomer. Part of a complex composed of SLC40A1/ferroportin, TF/transferrin and HEPH/hephaestin that transfers iron from cells to transferrin. As to expression, expressed by the liver and secreted in plasma.

Its subcellular location is the secreted. Functionally, transferrins are iron binding transport proteins which can bind two Fe(3+) ions in association with the binding of an anion, usually bicarbonate. It is responsible for the transport of iron from sites of absorption and heme degradation to those of storage and utilization. Serum transferrin may also have a further role in stimulating cell proliferation. This Mus musculus (Mouse) protein is Serotransferrin (Tf).